We begin with the raw amino-acid sequence, 243 residues long: Adenosine 5'-phosphosulfate reductase (243 aa).

Residues cysteine 126, cysteine 127, cysteine 209, and cysteine 212 each contribute to the [4Fe-4S] cluster site. Cysteine 235 functions as the Nucleophile; cysteine thiosulfonate intermediate in the catalytic mechanism.

It belongs to the PAPS reductase family. CysH subfamily. [4Fe-4S] cluster is required as a cofactor.

The protein localises to the cytoplasm. It catalyses the reaction [thioredoxin]-disulfide + sulfite + AMP + 2 H(+) = adenosine 5'-phosphosulfate + [thioredoxin]-dithiol. The protein operates within sulfur metabolism; hydrogen sulfide biosynthesis; sulfite from sulfate. Catalyzes the formation of sulfite from adenosine 5'-phosphosulfate (APS) using thioredoxin as an electron donor. The polypeptide is Adenosine 5'-phosphosulfate reductase (Staphylococcus epidermidis (strain ATCC 35984 / DSM 28319 / BCRC 17069 / CCUG 31568 / BM 3577 / RP62A)).